Here is a 134-residue protein sequence, read N- to C-terminus: Small ribosomal subunit protein uS8 (134 aa).

Belongs to the universal ribosomal protein uS8 family. As to quaternary structure, part of the 30S ribosomal subunit. Contacts proteins S5 and S12.

Its function is as follows. One of the primary rRNA binding proteins, it binds directly to 16S rRNA central domain where it helps coordinate assembly of the platform of the 30S subunit. In Sphingopyxis alaskensis (strain DSM 13593 / LMG 18877 / RB2256) (Sphingomonas alaskensis), this protein is Small ribosomal subunit protein uS8.